The following is a 339-amino-acid chain: Dihydroorotate dehydrogenase (quinone) (339 aa).

Residues 61–65 (AGLDK) and Thr85 contribute to the FMN site. Lys65 contacts substrate. Residue 110 to 114 (NRMGF) participates in substrate binding. The FMN site is built by Asn138 and Asn171. Residue Asn171 coordinates substrate. Catalysis depends on Ser174, which acts as the Nucleophile. Asn176 contributes to the substrate binding site. Lys216 and Thr244 together coordinate FMN. 245–246 (NT) is a substrate binding site. Residues Gly267, Gly296, and 317–318 (YS) each bind FMN.

It belongs to the dihydroorotate dehydrogenase family. Type 2 subfamily. In terms of assembly, monomer. FMN serves as cofactor.

It localises to the cell membrane. The catalysed reaction is (S)-dihydroorotate + a quinone = orotate + a quinol. Its pathway is pyrimidine metabolism; UMP biosynthesis via de novo pathway; orotate from (S)-dihydroorotate (quinone route): step 1/1. Functionally, catalyzes the conversion of dihydroorotate to orotate with quinone as electron acceptor. This is Dihydroorotate dehydrogenase (quinone) from Pseudomonas fluorescens (strain Pf0-1).